The following is a 357-amino-acid chain: EGF-like domain-containing protein 2 (357 aa).

The first 20 residues, 1–20 (MPPSLSHLFLLSTFASLALC), serve as a signal peptide directing secretion. EGF-like domains are found at residues 21-55 (SFYC…FNCG) and 61-93 (ISAA…PTCQ). Intrachain disulfides connect cysteine 24-cysteine 37, cysteine 31-cysteine 43, cysteine 45-cysteine 54, cysteine 65-cysteine 75, cysteine 69-cysteine 81, and cysteine 83-cysteine 92.

As to expression, prismatic layer of shell (at protein level). Expressed primarily in the mantle with highest level in the mantle edge and lower level in the mantle pallium.

Its subcellular location is the secreted. This chain is EGF-like domain-containing protein 2, found in Pinctada maxima (Silver-lipped pearl oyster).